We begin with the raw amino-acid sequence, 59 residues long: Small ribosomal subunit protein bS21 (59 aa).

A disordered region spans residues 40-59 (KPSIKKRAKSKAALKYKKQR).

Belongs to the bacterial ribosomal protein bS21 family.

This chain is Small ribosomal subunit protein bS21, found in Protochlamydia amoebophila (strain UWE25).